We begin with the raw amino-acid sequence, 245 residues long: Endonuclease III (245 aa).

Residues methionine 119 to glycine 138 form the HhH domain. [4Fe-4S] cluster is bound by residues cysteine 198, cysteine 205, cysteine 208, and cysteine 214.

Belongs to the Nth/MutY family. [4Fe-4S] cluster serves as cofactor.

The catalysed reaction is 2'-deoxyribonucleotide-(2'-deoxyribose 5'-phosphate)-2'-deoxyribonucleotide-DNA = a 3'-end 2'-deoxyribonucleotide-(2,3-dehydro-2,3-deoxyribose 5'-phosphate)-DNA + a 5'-end 5'-phospho-2'-deoxyribonucleoside-DNA + H(+). In terms of biological role, DNA repair enzyme that has both DNA N-glycosylase activity and AP-lyase activity. The DNA N-glycosylase activity releases various damaged pyrimidines from DNA by cleaving the N-glycosidic bond, leaving an AP (apurinic/apyrimidinic) site. The AP-lyase activity cleaves the phosphodiester bond 3' to the AP site by a beta-elimination, leaving a 3'-terminal unsaturated sugar and a product with a terminal 5'-phosphate. Has a preference for oxidized pyrimidines, such as thymine glycol (prefers 5S isomers) 5,6-dihydrouracil:G, 5-hydroxyuracil:G, 5-hydroxycytosine:G and urea:A. Cleaves ssDNA containing an AP site. This is Endonuclease III from Mycobacterium tuberculosis (strain ATCC 25618 / H37Rv).